A 336-amino-acid chain; its full sequence is MNSPALQDCVRDWGELQENYQDIQETHRLYKQKLEELAKLQTRCSGTIARQKKKLKELSVELKKYKSSVKNVEEEEEQISVLNNQIRIREKTFFEMESFLPKKNGLYLSLVLGNVNVTLLSKQSKFAYKDEYEKFKLYLTMILMVLSFICRFVLNSRVTDAVFNFLLVWYYCTLTIRESILINNGSRIKGWWVLNHYISTFLSGVMLTWPDGLMYQMFRNQFLSFSMYQSFVQFLQYYYQSGCLYRLRALGERHNMDLTVEGFQSWMWRGLTFLLPFLFFGQFWQLYNAITLFKLARHPECKEWQVIMCGLPFLVHFLGNFFTTLRVVHQKFQKQN.

The Cytoplasmic segment spans residues 1 to 131; the sequence is MNSPALQDCV…KQSKFAYKDE (131 aa). K129 contacts CoA. The chain crosses the membrane as a helical span at residues 132-151; that stretch reads YEKFKLYLTMILMVLSFICR. Topologically, residues 152–157 are extracellular; sequence FVLNSR. Residues 158 to 176 traverse the membrane as a helical segment; that stretch reads VTDAVFNFLLVWYYCTLTI. At 177–189 the chain is on the cytoplasmic side; it reads RESILINNGSRIK. CoA is bound by residues S186 and R187. Residues 190 to 208 form a helical membrane-spanning segment; the sequence is GWWVLNHYISTFLSGVMLT. At 209–217 the chain is on the extracellular side; that stretch reads WPDGLMYQM. A helical membrane pass occupies residues 218 to 239; sequence FRNQFLSFSMYQSFVQFLQYYY. Q236, Y239, and Q240 together coordinate CoA. Residues 240–269 lie on the Cytoplasmic side of the membrane; that stretch reads QSGCLYRLRALGERHNMDLTVEGFQSWMWR. A helical membrane pass occupies residues 270 to 293; that stretch reads GLTFLLPFLFFGQFWQLYNAITLF. The Extracellular portion of the chain corresponds to 294-303; the sequence is KLARHPECKE. Residues 304–329 form a helical membrane-spanning segment; that stretch reads WQVIMCGLPFLVHFLGNFFTTLRVVH. The Cytoplasmic segment spans residues 330–336; it reads QKFQKQN. Position 331 (K331) interacts with CoA.

This sequence belongs to the TMEM120 family. In terms of assembly, homodimer.

It localises to the cell membrane. The protein localises to the nucleus inner membrane. It is found in the endoplasmic reticulum. Functionally, multifunctional protein involved in mechanosensation, and plays an essential role in lipid metabolism. May function as a potential ion channel involved in sensing mechanical stimuli. TMEM120A is structurally similar to a lipid-modifying enzyme, ELOVL7, and contains a bound coenzyme A molecule, which suggests it might function as an enzyme in lipid metabolism. In Xenopus tropicalis (Western clawed frog), this protein is Transmembrane protein 120A.